A 418-amino-acid chain; its full sequence is Voltage-gated ClC-type chloride channel ClcB (418 aa).

Residues 1-4 are Cytoplasmic-facing; it reads MFRR. The helical transmembrane segment at 5–25 threads the bilayer; that stretch reads LLIATIVGILAAFAVAGFRHA. Topologically, residues 26-53 are periplasmic; the sequence is MLLLEWLFLNNDSGSLVNAATNLSPWRR. Residues 54–74 form a helical membrane-spanning segment; it reads LLTPALGGLAAGLLLMGWQKF. Over 75–145 the chain is Cytoplasmic; it reads TQQRPHAPTD…QRFTPRQEWK (71 aa). Residues 146–166 form a helical membrane-spanning segment; sequence LWIACGAAAGMAAAYRAPLAG. The Periplasmic portion of the chain corresponds to 167 to 177; that stretch reads SLFIAEVLFGT. A helical membrane pass occupies residues 178–200; that stretch reads MMLASLGPVIISAVVALLISNLI. Residues 201-221 lie on the Cytoplasmic side of the membrane; the sequence is NHSDALLYSVQLSVTVQARDY. The helical transmembrane segment at 222 to 242 threads the bilayer; sequence ALIISTGVLAGLCGPLLLTLM. Residues 243 to 257 lie on the Periplasmic side of the membrane; the sequence is NACHRGFVSLKLAPP. Residues 258-278 form a helical membrane-spanning segment; it reads WQLALGGLIVGLLSLFTPAVW. Over 279 to 290 the chain is Cytoplasmic; that stretch reads GNGYSTVQSFLT. Residues 291–311 form a helical membrane-spanning segment; the sequence is APPLLMIIAGIFLCKLCAVLA. At 312–315 the chain is on the periplasmic side; it reads SSGS. Residues 316 to 336 traverse the membrane as a helical segment; it reads GAPGGVFTPTLFIGLAIGMLY. Topologically, residues 337–351 are cytoplasmic; that stretch reads GRSLGLWLPDGEEIT. The helical transmembrane segment at 352 to 372 threads the bilayer; it reads LLLGLTGMATLLAATTHAPIM. Residues 373 to 379 lie on the Periplasmic side of the membrane; the sequence is STLMICE. Residues 380 to 400 form a helical membrane-spanning segment; it reads MTGEYQLLPGLLIACVIASVI. The Cytoplasmic portion of the chain corresponds to 401–418; that stretch reads SRTLHRDSIYRQHTAKHS.

Belongs to the chloride channel (TC 2.A.49) family. ClcB subfamily.

The protein localises to the cell inner membrane. In terms of biological role, probably acts as an electrical shunt for an outwardly-directed proton pump that is linked to amino acid decarboxylation, as part of the extreme acid resistance (XAR) response. This Escherichia coli O6:H1 (strain CFT073 / ATCC 700928 / UPEC) protein is Voltage-gated ClC-type chloride channel ClcB (clcB).